The chain runs to 306 residues: Protein FdhE homolog (306 aa).

Belongs to the FdhE family.

It is found in the cytoplasm. In terms of biological role, necessary for formate dehydrogenase activity. The sequence is that of Protein FdhE homolog from Glaesserella parasuis serovar 5 (strain SH0165) (Haemophilus parasuis).